The sequence spans 267 residues: MHRIAVPAATGAPTAQAPVKVAARNLDFYYDKYHALKSINIEIPEKRVTALIGPSGCGKSTLLRIFNRIYALYPKMEARGEVLLDNENILSPKYPMNRLRSKVGMVFQKPVPFPMTIFENVAYGIRHHEKLSKADMQNRVEQALRQGALWDEVKDKLGQSALGLSGGQQQRLCIARAVALRPDVLLLDEPTSALDPISTSRIEQLVEELKRDYTIVIVTHNMQQAARVSDYTAFMYLGDLIEHDRTETIFSQPSKQQTEDYITGRFG.

The ABC transporter domain occupies 21–262; it reads VAARNLDFYY…PSKQQTEDYI (242 aa). Residue 53–60 participates in ATP binding; the sequence is GPSGCGKS.

The protein belongs to the ABC transporter superfamily. Phosphate importer (TC 3.A.1.7) family. In terms of assembly, the complex is composed of two ATP-binding proteins (PstB), two transmembrane proteins (PstC and PstA) and a solute-binding protein (PstS).

The protein localises to the cell inner membrane. The catalysed reaction is phosphate(out) + ATP + H2O = ADP + 2 phosphate(in) + H(+). In terms of biological role, part of the ABC transporter complex PstSACB involved in phosphate import. Responsible for energy coupling to the transport system. In Xanthomonas axonopodis pv. citri (strain 306), this protein is Phosphate import ATP-binding protein PstB.